Consider the following 235-residue polypeptide: Large ribosomal subunit protein uL1 (235 aa).

The protein belongs to the universal ribosomal protein uL1 family. As to quaternary structure, part of the 50S ribosomal subunit.

Binds directly to 23S rRNA. The L1 stalk is quite mobile in the ribosome, and is involved in E site tRNA release. Functionally, protein L1 is also a translational repressor protein, it controls the translation of the L11 operon by binding to its mRNA. This chain is Large ribosomal subunit protein uL1, found in Synechococcus sp. (strain CC9311).